We begin with the raw amino-acid sequence, 723 residues long: Solute carrier organic anion transporter family member 4A1 (723 aa).

At 1 to 102 (MPQHAMGDTH…KCLQVFNTPK (102 aa)) the chain is on the cytoplasmic side. Residues 23–64 (SSATDSGCDTPPSSRASPASLRSAHGTLGSSSQPLFEPQAEK) form a disordered region. The segment covering 33 to 46 (PPSSRASPASLRSA) has biased composition (low complexity). Phosphoserine occurs at positions 39, 42, and 45. Residues 103-123 (GFLFFLCAASFLQGMTVNGFI) traverse the membrane as a helical segment. Residues 124–142 (NTVITSIERRFDLHSYQSG) are Extracellular-facing. The helical transmembrane segment at 143–163 (LIASSYDIAACLCLTFVSYFG) threads the bilayer. Residues 164–169 (GNGHKP) are Cytoplasmic-facing. The helical transmembrane segment at 170–194 (RWLGWGVLVLGIGSLVFALPHFTAG) threads the bilayer. Residues 195 to 224 (RYEVEMDEGLGTGTCLTNQSHVECKDSASG) lie on the Extracellular side of the membrane. The N-linked (GlcNAc...) asparagine glycan is linked to Asn212. Residues 225 to 255 (LSNYRLIFMLGQLLHGVGATPLYTLGVTYLD) traverse the membrane as a helical segment. Residues 256 to 274 (ENVKSSYSPIYIAIFYTAA) are Cytoplasmic-facing. A helical membrane pass occupies residues 275–295 (ILGPAAGYLIGGAMLNVYTEV). At 296–309 (GQRTELTTDSPLWV) the chain is on the extracellular side. A helical membrane pass occupies residues 310-334 (GAWWIGFLGTGIAAFLIAIPILGYP). The Cytoplasmic segment spans residues 335–380 (RQLPGSQRYVVMRAAETQQLKDHSRGAVSNPAFGKTVRDLPLSIWL). Residues 381-402 (LLRNPTFILLCLAGATEATLIA) form a helical membrane-spanning segment. Over 403-422 (GMSTFGPKFFEAQFSLSASE) the chain is Extracellular. The helical transmembrane segment at 423-446 (AATLFGYLVVPAGGGGTLLGGFLV) threads the bilayer. The Cytoplasmic segment spans residues 447–450 (NKFK). The chain crosses the membrane as a helical span at residues 451-473 (LRGSGIIRFCLFCTLTSLLAFFV). Over 474–582 (FLMHCPNVHM…ASTCQSKPFL (109 aa)) the chain is Extracellular. The Kazal-like domain maps to 500–557 (LDLKAACNAIYCCQPKHYSPLCGSDGTMYYSPCYAGCPADAETDLGGQKVYRGCSCIL). Disulfide bonds link Cys506–Cys536 and Cys521–Cys555. A glycan (N-linked (GlcNAc...) asparagine) is linked at Asn566. The chain crosses the membrane as a helical span at residues 583–605 (LVLVFVVIIFTFLSSIPALTATL). Residues 606-614 (RCVSDRQRS) are Cytoplasmic-facing. The helical transmembrane segment at 615–640 (FALGIQWIVVRTLGSIPGPIAFGWVI) threads the bilayer. Residues 641-673 (DKACLLWQDQCGHQGSCFVYENEAMSRYMLIAG) are Extracellular-facing. A helical transmembrane segment spans residues 674–691 (LTFKVLGFLFFVAAYFLY). At 692–723 (KSPSVSSDGLEASLPSQSSASDSPTEQLQSNV) the chain is on the cytoplasmic side. Positions 700 to 723 (GLEASLPSQSSASDSPTEQLQSNV) are disordered. Residues 701 to 723 (LEASLPSQSSASDSPTEQLQSNV) are compositionally biased toward low complexity.

This sequence belongs to the organo anion transporter (TC 2.A.60) family.

It localises to the cell membrane. It catalyses the reaction 3,3',5-triiodo-L-thyronine(out) + L-glutamate(in) = 3,3',5-triiodo-L-thyronine(in) + L-glutamate(out). The catalysed reaction is L-thyroxine(out) + L-glutamate(in) = L-thyroxine(in) + L-glutamate(out). It carries out the reaction estrone 3-sulfate(out) + L-glutamate(in) = estrone 3-sulfate(in) + L-glutamate(out). The enzyme catalyses taurocholate(out) + L-glutamate(in) = taurocholate(in) + L-glutamate(out). It catalyses the reaction 3,3',5-triiodo-L-thyronine(out) = 3,3',5-triiodo-L-thyronine(in). The catalysed reaction is L-thyroxine(out) = L-thyroxine(in). It carries out the reaction 3,3',5'-triiodo-L-thyronine(out) = 3,3',5'-triiodo-L-thyronine(in). The enzyme catalyses estrone 3-sulfate(out) = estrone 3-sulfate(in). It catalyses the reaction 17beta-estradiol 17-O-(beta-D-glucuronate)(out) = 17beta-estradiol 17-O-(beta-D-glucuronate)(in). The catalysed reaction is taurocholate(out) = taurocholate(in). It carries out the reaction prostaglandin E2(out) = prostaglandin E2(in). Its function is as follows. Organic anion antiporter with apparent broad substrate specificity. Recognizes various substrates including thyroid hormones 3,3',5-triiodo-L-thyronine (T3), L-thyroxine (T4) and 3,3',5'-triiodo-L-thyronine (rT3), conjugated steroids such as estrone 3-sulfate and estradiol 17-beta glucuronide, bile acids such as taurocholate and prostanoids such as prostaglandin E2, likely operating in a tissue-specific manner. May be involved in uptake of metabolites from the circulation into organs such as kidney, liver or placenta. Possibly drives the selective transport of thyroid hormones and estrogens coupled to an outward glutamate gradient across the microvillous membrane of the placenta. The transport mechanism, its electrogenicity and potential tissue-specific counterions remain to be elucidated. This Mus musculus (Mouse) protein is Solute carrier organic anion transporter family member 4A1 (Slco4a1).